The sequence spans 243 residues: Venom nerve growth factor (243 aa).

The N-terminal stretch at 1-18 (MSMLCYTLIIVFLIGIWA) is a signal peptide. Positions 19 to 125 (APKSEDNVPL…TLNRNIRAKR (107 aa)) are excised as a propeptide. Basic and acidic residues predominate over residues 47–66 (GLKTSRNTDQRHPAPKKAED). A disordered region spans residues 47–69 (GLKTSRNTDQRHPAPKKAEDQEL). Disulfide bonds link cysteine 139/cysteine 204, cysteine 182/cysteine 232, and cysteine 192/cysteine 234. A glycan (N-linked (GlcNAc...) asparagine) is linked at asparagine 148.

This sequence belongs to the NGF-beta family. As to quaternary structure, homodimer; non-covalently linked. Expressed by the venom gland.

It is found in the secreted. Its function is as follows. Nerve growth factor is important for the development and maintenance of the sympathetic and sensory nervous systems. It stimulates division and differentiation of sympathetic and embryonic sensory neurons as well as basal forebrain cholinergic neurons in the brain. Its relevance in the snake venom is not clear. However, it has been shown to inhibit metalloproteinase-dependent proteolysis of platelet glycoprotein Ib alpha, suggesting a metalloproteinase inhibition to prevent metalloprotease autodigestion and/or protection against prey proteases. Binds a lipid between the two protein chains in the homodimer. The lipid-bound form promotes histamine relase from mouse mast cells, contrary to the lipid-free form. The polypeptide is Venom nerve growth factor (Oxyuranus scutellatus scutellatus (Australian taipan)).